Reading from the N-terminus, the 286-residue chain is Interferon-induced 35 kDa protein homolog (286 aa).

The leucine-zipper stretch occupies residues 5 to 26 (LQTVLYSLQEEQARLKMRLQEL). NID domains are found at residues 81–170 (ALVT…GDVE) and 183–266 (FADE…GEVE).

It belongs to the NMI family. As to quaternary structure, homodimer. Also interacts with B-ATF. Interacts with TRIM21. Interacts (via NID domains) with NMI (via NID domains); the interaction is direct and is facilitated by TRIM21. In terms of processing, phosphorylated. Dephosphorylation correlates with the formation of a complex with NMI.

It is found in the cytoplasm. Its subcellular location is the nucleus. The protein localises to the secreted. In terms of biological role, acts as a signaling pathway regulator involved in innate immune system response. In response to interferon IFN-alpha, associates in a complex with transcriptional regulator NMI to regulate immune response; the complex formation prevents proteasome-mediated degradation of IFI35 and correlates with IFI35 dephosphorylation. In complex with NMI, inhibits virus-triggered type I interferon/IFN-beta production. In complex with NMI, negatively regulates nuclear factor NF-kappa-B signaling by inhibiting the nuclear translocation, activation and transcription of the NF-kappa-B subunit p65/RELA, resulting in the inhibition of endothelial cell proliferation, migration and re-endothelialization of injured arteries. Beside its role as an intracellular signaling pathway regulator, also functions extracellularly as damage-associated molecular patterns (DAMPs) to promote inflammation when actively released by macrophage to the extracellular space during cell injury and pathogen invasion. Macrophage-secreted IFI35 activates NF-kappa-B signaling in adjacent macrophages through Toll-like receptor 4/TLR4 activation, thereby inducing NF-kappa-B translocation from the cytoplasm into the nucleus which promotes the release of pro-inflammatory cytokines. This is Interferon-induced 35 kDa protein homolog from Mus musculus (Mouse).